Here is a 435-residue protein sequence, read N- to C-terminus: Eukaryotic peptide chain release factor subunit 1-2 (435 aa).

Alanine 2 bears the N-acetylalanine mark.

This sequence belongs to the eukaryotic release factor 1 family. Heterodimer of two subunits, one of which binds GTP. Interacts with OR.

The protein resides in the cytoplasm. Functionally, directs the termination of nascent peptide synthesis (translation) in response to the termination codons UAA, UAG and UGA. Modulates plant growth and development. The protein is Eukaryotic peptide chain release factor subunit 1-2 of Brassica oleracea var. botrytis (Cauliflower).